A 158-amino-acid polypeptide reads, in one-letter code: Transcriptional repressor NrdR (158 aa).

A disordered region spans residues 1–22 (MRCPYCGSEDTQVKDSRPAEDN). Residues 3–34 (CPYCGSEDTQVKDSRPAEDNTSIRRRRICPDC) fold into a zinc finger. The segment covering 11–22 (TQVKDSRPAEDN) has biased composition (basic and acidic residues). Residues 49 to 139 (LMVIKKTGRK…VYRDFSLAED (91 aa)) form the ATP-cone domain.

This sequence belongs to the NrdR family. Zn(2+) serves as cofactor.

Negatively regulates transcription of bacterial ribonucleotide reductase nrd genes and operons by binding to NrdR-boxes. In Rhizobium etli (strain CIAT 652), this protein is Transcriptional repressor NrdR.